Reading from the N-terminus, the 868-residue chain is MASPASVAGGGEDSNGCSSLIDPLLVSRTSSIGGAERKAAGGGGGGAKGKHWAAADKGERRAAKECGGEDGRRPLLFRSYRVKGSLLHPYRALIFARLIAVLLFFGWRIRHNNSDIMWFWTMSVAGDVWFGFSWLLNQLPKFNPVKTIPDLTALRQYCDLADGSYRLPGIDVFVTTADPIDEPVLYTMNCVLSILAADYPVDRSACYLSDDSGALILYEALVETAKFATLWVPFCRKHCIEPRSPESYFELEAPSYTGSAPEEFKNDSRIVHLEYDEFKVRLEALPETIRKRSDVYNSMKTDQGAPNATWMANGTQWPGTWIEPIENHRKGHHAGIVKVVLDHPIRGHNLSLKDSTGNNLNFNATDVRIPMLVYVSRGKNPNYDHNKKAGALNAQLRASALLSNAQFIINFDCDHYINNSQAFRAAICFMLDQREGDNTAFVQFPQRFDNVDPKDRYGNHNRVFFDGTMLALNGLQGPSYLGTGCMFRRLALYGIDPPHWRQDNITPEASKFGNSILLLESVLEALNQDRFATPSPVNDIFVNELEMVVSASFDKETDWGKGVGYIYDIATEDIVTGFRIHGQGWRSMYCTMEHDAFCGTAPINLTERLHQIVRWSGGSLEMFFSHNNPLIGGRRLQPLQRVSYLNMTIYPVTSLFILLYAISPVMWLIPDEVYIQRPFTRYVVYLLVIILMIHMIGWLEIKWAGITWLDYWRNEQFFMIGSTSAYPTAVLHMVVNLLTKKGIHFRVTSKQTTADTNDKFADLYEMRWVPMLIPTMVVLVANIGAIGVAIGKTAVYMGVWTIAQKRHAAMGLLFNMWVMFLLYPFALAIMGRWAKRSIILVVLLPIIFVIVALVYVATHILLANIIPF.

A disordered region spans residues 36–68 (ERKAAGGGGGGAKGKHWAAADKGERRAAKECGG). The span at 53-68 (AAADKGERRAAKECGG) shows a compositional bias: basic and acidic residues. 2 helical membrane-spanning segments follow: residues 86–106 (LLHP…LFFG) and 116–136 (IMWF…SWLL). Residue D211 is part of the active site. Substrate-binding residues include D412 and D414. Residue D573 is part of the active site. Transmembrane regions (helical) follow at residues 649–669 (IYPV…MWLI), 686–706 (LLVI…WAGI), 717–737 (FFMI…VVNL), 771–791 (MLIP…VAIG), 810–830 (MGLL…LAIM), and 838–858 (IILV…YVAT).

It belongs to the glycosyltransferase 2 family. Plant cellulose synthase-like F subfamily.

It localises to the golgi apparatus membrane. Functionally, may catalyze both beta-1,3 and beta-1,4 glycosidic linkage on beta-D-glucan. Essential for (1,3;1,4)-beta-D-glucans synthesis in grasses and cereals (Poaceae). The mixed-linked glucans (which are not present in walls of dicotyledons or most other monocotyledonous plants) are particularly important constituents of the walls of the starchy endosperm and aleurone cells of cereal grains such as oats, wheat, rice and barley. They can account for up to 70% by weight of the wall. The chain is Probable mixed-linked glucan synthase 3 (CSLF3) from Oryza sativa subsp. japonica (Rice).